A 396-amino-acid chain; its full sequence is Na(+)/H(+) antiporter NhaA (396 aa).

11 helical membrane-spanning segments follow: residues 17 to 37, 59 to 79, 97 to 117, 127 to 147, 156 to 176, 181 to 201, 206 to 226, 260 to 280, 292 to 312, 333 to 353, and 368 to 388; these read FSGLLLILFCFLAIFISNTNF, FSLTNIVNDILMTFFFLEIGI, ILPGIAAIGGMIFPALIYNFI, GWAITVATDIAFAVGVLKILG, IFLLSLAIFDDIGAILIIAFF, IDQYMILLSTLVILTILSINY, CIYIYIIFGILLWESIFLSGI, SLSFLNKYFILPIFAFFNSGI, LLPFGIFFGLVLGKPIGVFLF, IAGISFLCGIGFTMSIFISNL, and FSILISSIVSSVIGFLFLYFL.

This sequence belongs to the NhaA Na(+)/H(+) (TC 2.A.33) antiporter family.

It localises to the cell membrane. The enzyme catalyses Na(+)(in) + 2 H(+)(out) = Na(+)(out) + 2 H(+)(in). Functionally, na(+)/H(+) antiporter that extrudes sodium in exchange for external protons. This chain is Na(+)/H(+) antiporter NhaA, found in Wigglesworthia glossinidia brevipalpis.